The primary structure comprises 121 residues: Ribonuclease P protein component (121 aa).

The protein belongs to the RnpA family. As to quaternary structure, consists of a catalytic RNA component (M1 or rnpB) and a protein subunit.

It catalyses the reaction Endonucleolytic cleavage of RNA, removing 5'-extranucleotides from tRNA precursor.. In terms of biological role, RNaseP catalyzes the removal of the 5'-leader sequence from pre-tRNA to produce the mature 5'-terminus. It can also cleave other RNA substrates such as 4.5S RNA. The protein component plays an auxiliary but essential role in vivo by binding to the 5'-leader sequence and broadening the substrate specificity of the ribozyme. This is Ribonuclease P protein component from Lactobacillus delbrueckii subsp. bulgaricus (strain ATCC 11842 / DSM 20081 / BCRC 10696 / JCM 1002 / NBRC 13953 / NCIMB 11778 / NCTC 12712 / WDCM 00102 / Lb 14).